Consider the following 84-residue polypeptide: Large ribosomal subunit protein bL27 (84 aa).

Residues 1-29 (MAHKKGGGSTKNGRDSNPKYLGIKASGGS) are disordered.

This sequence belongs to the bacterial ribosomal protein bL27 family.

The sequence is that of Large ribosomal subunit protein bL27 from Chlorobium phaeobacteroides (strain BS1).